A 155-amino-acid chain; its full sequence is SsrA-binding protein (155 aa).

The protein belongs to the SmpB family.

Its subcellular location is the cytoplasm. Its function is as follows. Required for rescue of stalled ribosomes mediated by trans-translation. Binds to transfer-messenger RNA (tmRNA), required for stable association of tmRNA with ribosomes. tmRNA and SmpB together mimic tRNA shape, replacing the anticodon stem-loop with SmpB. tmRNA is encoded by the ssrA gene; the 2 termini fold to resemble tRNA(Ala) and it encodes a 'tag peptide', a short internal open reading frame. During trans-translation Ala-aminoacylated tmRNA acts like a tRNA, entering the A-site of stalled ribosomes, displacing the stalled mRNA. The ribosome then switches to translate the ORF on the tmRNA; the nascent peptide is terminated with the 'tag peptide' encoded by the tmRNA and targeted for degradation. The ribosome is freed to recommence translation, which seems to be the essential function of trans-translation. The polypeptide is SsrA-binding protein (Streptococcus pneumoniae (strain P1031)).